A 343-amino-acid polypeptide reads, in one-letter code: Selenide, water dikinase (343 aa).

Sec16 is an active-site residue. A non-standard amino acid (selenocysteine) is located at residue Sec16. ATP contacts are provided by residues Lys19 and 46–48 (GAE). Position 49 (Asp49) interacts with Mg(2+). Residues Asp66, Asp89, and 137 to 139 (GHT) each bind ATP. Asp89 is a Mg(2+) binding site. Position 225 (Asp225) interacts with Mg(2+).

It belongs to the selenophosphate synthase 1 family. Class I subfamily. Homodimer. It depends on Mg(2+) as a cofactor.

It carries out the reaction hydrogenselenide + ATP + H2O = selenophosphate + AMP + phosphate + 2 H(+). Synthesizes selenophosphate from selenide and ATP. This Geobacter sp. (strain M21) protein is Selenide, water dikinase.